The primary structure comprises 95 residues: Aspartyl/glutamyl-tRNA(Asn/Gln) amidotransferase subunit C (95 aa).

Belongs to the GatC family. In terms of assembly, heterotrimer of A, B and C subunits.

It catalyses the reaction L-glutamyl-tRNA(Gln) + L-glutamine + ATP + H2O = L-glutaminyl-tRNA(Gln) + L-glutamate + ADP + phosphate + H(+). It carries out the reaction L-aspartyl-tRNA(Asn) + L-glutamine + ATP + H2O = L-asparaginyl-tRNA(Asn) + L-glutamate + ADP + phosphate + 2 H(+). Allows the formation of correctly charged Asn-tRNA(Asn) or Gln-tRNA(Gln) through the transamidation of misacylated Asp-tRNA(Asn) or Glu-tRNA(Gln) in organisms which lack either or both of asparaginyl-tRNA or glutaminyl-tRNA synthetases. The reaction takes place in the presence of glutamine and ATP through an activated phospho-Asp-tRNA(Asn) or phospho-Glu-tRNA(Gln). The sequence is that of Aspartyl/glutamyl-tRNA(Asn/Gln) amidotransferase subunit C from Shouchella clausii (strain KSM-K16) (Alkalihalobacillus clausii).